Reading from the N-terminus, the 204-residue chain is MTDRIARVERTTKESSITVELNLDGTGIVDVSTGVPFFDHMLTALGSHASFDLTVHAKGDIEIEAHHTVEDTSIVLGQALGQALGDKKGIRRFGDAFIPMDETLAHASVDVSGRPYCVHTGEPEHLLHAVIGGYPGVPYATVINRHVFESIALNARIALHVRVLYGRDQHHITEAEFKAVARALREAVEPDPRVTGVPSTKGSL.

The protein belongs to the imidazoleglycerol-phosphate dehydratase family.

The protein resides in the cytoplasm. It catalyses the reaction D-erythro-1-(imidazol-4-yl)glycerol 3-phosphate = 3-(imidazol-4-yl)-2-oxopropyl phosphate + H2O. It functions in the pathway amino-acid biosynthesis; L-histidine biosynthesis; L-histidine from 5-phospho-alpha-D-ribose 1-diphosphate: step 6/9. The polypeptide is Imidazoleglycerol-phosphate dehydratase (Rhodococcus opacus (strain B4)).